A 383-amino-acid polypeptide reads, in one-letter code: MLASYASDPLKSRGRLYKELPTSYRNEFERDRDRIIHTNAFRRLQYKTQVFINHEGDHYRNRLTHSLEVSTVARSVANTLNLSSDLAETIALAHDLGHTPFGHAGERALNECMKEYNGFSHNAQSLKILTLLEKRYAAYNGVNLTWEVLEGIVKHNGPITDEINEYIAEYNKQNDLELSTYASAEAQIAALADDISYISHDLEDSIGAKIIDFNSLAELKYIDQHVFEIKTKFKNISSSCLIYEVVRKLIHELITDLLWQTKENLNKEKITNIDEIRNLNYQIVDFTEKTNERIKETKKFLHERVYKSNKITAISLKCTKIVQGLFKVYMDDINLLPVNWKMLIDSNETYSKARIIADYIAGMTDRFAIQEYNQLCSLNFNNI.

Positions 62 to 198 (RLTHSLEVST…AALADDISYI (137 aa)) constitute an HD domain.

This sequence belongs to the dGTPase family. Type 2 subfamily.

This chain is Deoxyguanosinetriphosphate triphosphohydrolase-like protein, found in Rickettsia felis (strain ATCC VR-1525 / URRWXCal2) (Rickettsia azadi).